A 384-amino-acid chain; its full sequence is Alanine racemase (384 aa).

The Proton acceptor; specific for D-alanine role is filled by K46. At K46 the chain carries N6-(pyridoxal phosphate)lysine. R144 contributes to the substrate binding site. The Proton acceptor; specific for L-alanine role is filled by Y278. Residue M326 participates in substrate binding.

This sequence belongs to the alanine racemase family. The cofactor is pyridoxal 5'-phosphate.

It carries out the reaction L-alanine = D-alanine. It functions in the pathway amino-acid biosynthesis; D-alanine biosynthesis; D-alanine from L-alanine: step 1/1. Functionally, catalyzes the interconversion of L-alanine and D-alanine. May also act on other amino acids. This is Alanine racemase (alr) from Frankia casuarinae (strain DSM 45818 / CECT 9043 / HFP020203 / CcI3).